Reading from the N-terminus, the 123-residue chain is uncharacterized protein (123 aa).

The segment at 100 to 123 (NKQPKTTHHFSTNSSEYKSRKSKH) is disordered.

This is an uncharacterized protein from Acanthamoeba polyphaga mimivirus (APMV).